The chain runs to 285 residues: Bifunctional protein FolD (285 aa).

Residues 164–166, isoleucine 189, and isoleucine 230 each bind NADP(+); that span reads GAS.

This sequence belongs to the tetrahydrofolate dehydrogenase/cyclohydrolase family. As to quaternary structure, homodimer.

The catalysed reaction is (6R)-5,10-methylene-5,6,7,8-tetrahydrofolate + NADP(+) = (6R)-5,10-methenyltetrahydrofolate + NADPH. The enzyme catalyses (6R)-5,10-methenyltetrahydrofolate + H2O = (6R)-10-formyltetrahydrofolate + H(+). The protein operates within one-carbon metabolism; tetrahydrofolate interconversion. Its function is as follows. Catalyzes the oxidation of 5,10-methylenetetrahydrofolate to 5,10-methenyltetrahydrofolate and then the hydrolysis of 5,10-methenyltetrahydrofolate to 10-formyltetrahydrofolate. The chain is Bifunctional protein FolD from Sulfurimonas denitrificans (strain ATCC 33889 / DSM 1251) (Thiomicrospira denitrificans (strain ATCC 33889 / DSM 1251)).